A 276-amino-acid chain; its full sequence is Formamidopyrimidine-DNA glycosylase (276 aa).

The active-site Schiff-base intermediate with DNA is Pro2. Glu3 functions as the Proton donor in the catalytic mechanism. The active-site Proton donor; for beta-elimination activity is Lys58. DNA-binding residues include His92, Arg111, and Lys154. Residues 239–273 (QVYGHAGEECSSCGTILEKIKVNGRGTTFCPHCQV) form an FPG-type zinc finger. Residue Arg263 is the Proton donor; for delta-elimination activity of the active site.

It belongs to the FPG family. In terms of assembly, monomer. Requires Zn(2+) as cofactor.

It catalyses the reaction Hydrolysis of DNA containing ring-opened 7-methylguanine residues, releasing 2,6-diamino-4-hydroxy-5-(N-methyl)formamidopyrimidine.. It carries out the reaction 2'-deoxyribonucleotide-(2'-deoxyribose 5'-phosphate)-2'-deoxyribonucleotide-DNA = a 3'-end 2'-deoxyribonucleotide-(2,3-dehydro-2,3-deoxyribose 5'-phosphate)-DNA + a 5'-end 5'-phospho-2'-deoxyribonucleoside-DNA + H(+). In terms of biological role, involved in base excision repair of DNA damaged by oxidation or by mutagenic agents. Acts as a DNA glycosylase that recognizes and removes damaged bases. Has a preference for oxidized purines, such as 7,8-dihydro-8-oxoguanine (8-oxoG). Has AP (apurinic/apyrimidinic) lyase activity and introduces nicks in the DNA strand. Cleaves the DNA backbone by beta-delta elimination to generate a single-strand break at the site of the removed base with both 3'- and 5'-phosphates. The protein is Formamidopyrimidine-DNA glycosylase of Lactobacillus gasseri (strain ATCC 33323 / DSM 20243 / BCRC 14619 / CIP 102991 / JCM 1131 / KCTC 3163 / NCIMB 11718 / NCTC 13722 / AM63).